A 299-amino-acid polypeptide reads, in one-letter code: Nucleotide-binding protein SCO1952 (299 aa).

23–30 (GMSGAGRS) is a binding site for ATP. GTP is bound at residue 74–77 (DVRG).

The protein belongs to the RapZ-like family.

In terms of biological role, displays ATPase and GTPase activities. This chain is Nucleotide-binding protein SCO1952, found in Streptomyces coelicolor (strain ATCC BAA-471 / A3(2) / M145).